The following is a 452-amino-acid chain: Ribosomal L1 domain-containing protein 1 (452 aa).

Methionine 1 carries the post-translational modification N-acetylmethionine. Glycyl lysine isopeptide (Lys-Gly) (interchain with G-Cter in SUMO2) cross-links involve residues lysine 119 and lysine 253. The stretch at 277 to 350 (LRSLRKQELK…QKVTEECEEA (74 aa)) forms a coiled coil. Residues 283–452 (QELKKRKREN…DKKTKAAHSN (170 aa)) form a disordered region. Basic and acidic residues predominate over residues 292–301 (NAKLKKESKM). Over residues 309 to 319 (ATSLLTQSGLA) the composition is skewed to polar residues. Residues 330 to 341 (QKKKTNKAHKKQ) are compositionally biased toward basic residues. Phosphothreonine is present on residues threonine 334, threonine 344, threonine 360, threonine 399, and threonine 407. The segment covering 414–423 (KDVQEFRKPE) has biased composition (basic and acidic residues). Polar residues predominate over residues 425–440 (SSFSTPRKSGKKASNT). Threonine 429 carries the post-translational modification Phosphothreonine. An N6-acetyllysine modification is found at lysine 432. A Phosphoserine modification is found at serine 433.

The protein belongs to the universal ribosomal protein uL1 family. Highly divergent. As to quaternary structure, interacts with ING1. Interacts with KPNA7 and KPNA2.

It is found in the nucleus. It localises to the nucleolus. Regulates cellular senescence through inhibition of PTEN translation. Acts as a pro-apoptotic regulator in response to DNA damage. The sequence is that of Ribosomal L1 domain-containing protein 1 from Mus musculus (Mouse).